Consider the following 526-residue polypeptide: Ubiquitin carboxyl-terminal hydrolase 17-like protein A (526 aa).

A disordered region spans residues 1–21; sequence MVVALSFPEADPALSSPDAPE. Residues 51-348 form the USP domain; the sequence is CGLQNTGNSC…NAYVLFYVQQ (298 aa). The active-site Nucleophile is Cys-60. His-307 (proton acceptor) is an active-site residue. Residues 374-385 are compositionally biased toward basic residues; that stretch reads KKSRRKKHKKKS. Disordered regions lie at residues 374 to 394 and 465 to 494; these read KKSR…LGEP and RSTA…SQGP. Positions 473 to 486 are enriched in basic and acidic residues; the sequence is DSPDKENQPLHNAD.

Belongs to the peptidase C19 family. Post-translationally, polyubiquitinated; ubiquitination leads to its subsequent degradation. In terms of tissue distribution, expressed in hematopoietic progenitor cell lines Ba/F3 and FDCP1. Not detected in brain, lung, liver, kidney, thymus, spleen and bone marrow.

The enzyme catalyses Thiol-dependent hydrolysis of ester, thioester, amide, peptide and isopeptide bonds formed by the C-terminal Gly of ubiquitin (a 76-residue protein attached to proteins as an intracellular targeting signal).. Its function is as follows. Deubiquitinating enzyme that removes conjugated ubiquitin from specific proteins to regulate different cellular processes. Has deubiquitinating enzyme activity for DNAH5, suggesting a role in the regulation of DNAH5 degradation by the ubiquitin-proteasome pathway. Has growth-suppressing activity; induces arrest in G1 phase upon controlled expression. The polypeptide is Ubiquitin carboxyl-terminal hydrolase 17-like protein A (Usp17la) (Mus musculus (Mouse)).